A 348-amino-acid polypeptide reads, in one-letter code: Outer membrane protein assembly factor BamC (348 aa).

An N-terminal signal peptide occupies residues 1–24; sequence MATLLQTSKVMKVAGLSLVVFLAA. The N-palmitoyl cysteine moiety is linked to residue cysteine 25. Cysteine 25 is lipidated: S-diacylglycerol cysteine. Residues 211–230 are disordered; it reads SQQQEEAGQNNAKDSGALTV.

Belongs to the BamC family. In terms of assembly, part of the Bam complex, which is composed of the outer membrane protein BamA, and four lipoproteins BamB, BamC, BamD and BamE.

The protein localises to the cell outer membrane. Functionally, part of the outer membrane protein assembly complex, which is involved in assembly and insertion of beta-barrel proteins into the outer membrane. This is Outer membrane protein assembly factor BamC from Xenorhabdus nematophila (strain ATCC 19061 / DSM 3370 / CCUG 14189 / LMG 1036 / NCIMB 9965 / AN6).